The following is a 689-amino-acid chain: Elongation factor G (689 aa).

The tr-type G domain maps to 8 to 282; the sequence is LNTRNIGIMA…AVVDYLPSPL (275 aa). Residues 17-24, 81-85, and 135-138 contribute to the GTP site; these read AHIDAGKT, DTPGH, and NKMD.

It belongs to the TRAFAC class translation factor GTPase superfamily. Classic translation factor GTPase family. EF-G/EF-2 subfamily.

It is found in the cytoplasm. Functionally, catalyzes the GTP-dependent ribosomal translocation step during translation elongation. During this step, the ribosome changes from the pre-translocational (PRE) to the post-translocational (POST) state as the newly formed A-site-bound peptidyl-tRNA and P-site-bound deacylated tRNA move to the P and E sites, respectively. Catalyzes the coordinated movement of the two tRNA molecules, the mRNA and conformational changes in the ribosome. The chain is Elongation factor G from Mycoplasma mycoides subsp. mycoides SC (strain CCUG 32753 / NCTC 10114 / PG1).